We begin with the raw amino-acid sequence, 492 residues long: 2,3-bisphosphoglycerate-independent phosphoglycerate mutase (492 aa).

Residues Asp-11 and Ser-61 each contribute to the Mn(2+) site. Residue Ser-61 is the Phosphoserine intermediate of the active site. Substrate is bound by residues His-118, 147–148 (RD), Arg-177, Arg-183, 248–251 (RSDR), and Lys-321. Mn(2+) is bound by residues Asp-387, His-391, Asp-428, His-429, and His-446.

Belongs to the BPG-independent phosphoglycerate mutase family. In terms of assembly, monomer. Mn(2+) serves as cofactor.

It carries out the reaction (2R)-2-phosphoglycerate = (2R)-3-phosphoglycerate. It functions in the pathway carbohydrate degradation; glycolysis; pyruvate from D-glyceraldehyde 3-phosphate: step 3/5. In terms of biological role, catalyzes the interconversion of 2-phosphoglycerate and 3-phosphoglycerate. This is 2,3-bisphosphoglycerate-independent phosphoglycerate mutase from Wolinella succinogenes (strain ATCC 29543 / DSM 1740 / CCUG 13145 / JCM 31913 / LMG 7466 / NCTC 11488 / FDC 602W) (Vibrio succinogenes).